Consider the following 612-residue polypeptide: Kelch repeat and BTB domain-containing protein 3 (612 aa).

A BTB domain is found at 52-119 (YDFKIIMKDE…AYTGKTKITD (68 aa)). Residues 154 to 254 (CLQLLSISDS…QLSEETLQDC (101 aa)) form the BACK domain. Kelch repeat units follow at residues 295–341 (KYIF…SSYG), 343–403 (KIFL…MALD), 404–454 (RLFV…TCQN), 456–506 (IYVL…KAVP), and 552–599 (KIYI…VIQF).

In Homo sapiens (Human), this protein is Kelch repeat and BTB domain-containing protein 3.